A 600-amino-acid polypeptide reads, in one-letter code: ATP-dependent lipid A-core flippase (600 aa).

4 helical membrane passes run 26-46 (VGIFLLSIIGFVIFASTQPML), 82-102 (LLIVLIAAWQGLGSFLGNYFL), 167-187 (VFLFIYLLMMNWKLTLVMLAI), and 266-286 (PMLQLVIYSAMAVLMFLVLFL). The region spanning 30 to 321 (LLSIIGFVIF…LSEVSSTIQK (292 aa)) is the ABC transmembrane type-1 domain. The region spanning 353–589 (LEVKNLSFFY…NGYYARLHAM (237 aa)) is the ABC transporter domain. 387–394 (GRSGSGKS) contributes to the ATP binding site.

It belongs to the ABC transporter superfamily. Lipid exporter (TC 3.A.1.106) family. In terms of assembly, homodimer.

It localises to the cell inner membrane. It carries out the reaction ATP + H2O + lipid A-core oligosaccharideSide 1 = ADP + phosphate + lipid A-core oligosaccharideSide 2.. Its function is as follows. Involved in lipopolysaccharide (LPS) biosynthesis. Translocates lipid A-core from the inner to the outer leaflet of the inner membrane. Transmembrane domains (TMD) form a pore in the inner membrane and the ATP-binding domain (NBD) is responsible for energy generation. This is ATP-dependent lipid A-core flippase from Pseudomonas savastanoi pv. phaseolicola (strain 1448A / Race 6) (Pseudomonas syringae pv. phaseolicola (strain 1448A / Race 6)).